The chain runs to 156 residues: CD-NTase-associated protein 8 (156 aa).

Belongs to the bacterial HORMA family. HORMA3 subfamily. As to quaternary structure, interacts with Cap7 (also called HORMA2) and CdnC; forms CdnD:Cap7:Cap8 (also called CdnD:HORMA2:HORMA3) complexes with stoichiometries of 1:1:1 and 2:1:1.

CBASS (cyclic oligonucleotide-based antiphage signaling system) provides immunity against bacteriophage. The CD-NTase protein synthesizes cyclic nucleotides in response to infection; these serve as specific second messenger signals. The signals activate a diverse range of effectors, leading to bacterial cell death and thus abortive phage infection. A type III-C(AAA) CBASS system. Its function is as follows. A member of the CBASS system in this bacteria. It does not seem to bind a closure peptide, its exact function is unknown. The sequence is that of CD-NTase-associated protein 8 from Pseudomonas aeruginosa.